Here is a 224-residue protein sequence, read N- to C-terminus: dTTP/UTP pyrophosphatase (224 aa).

D77 functions as the Proton acceptor in the catalytic mechanism.

The protein belongs to the Maf family. YhdE subfamily. A divalent metal cation serves as cofactor.

The protein localises to the cytoplasm. It catalyses the reaction dTTP + H2O = dTMP + diphosphate + H(+). The catalysed reaction is UTP + H2O = UMP + diphosphate + H(+). Its function is as follows. Nucleoside triphosphate pyrophosphatase that hydrolyzes dTTP and UTP. May have a dual role in cell division arrest and in preventing the incorporation of modified nucleotides into cellular nucleic acids. The polypeptide is dTTP/UTP pyrophosphatase (Dehalococcoides mccartyi (strain ATCC BAA-2100 / JCM 16839 / KCTC 5957 / BAV1)).